A 273-amino-acid polypeptide reads, in one-letter code: Dermonecrotic toxin LspaSicTox-alphaIA2iv (273 aa).

His-5 is an active-site residue. The Mg(2+) site is built by Glu-25 and Asp-27. The active-site Nucleophile is the His-41. Disulfide bonds link Cys-45-Cys-51 and Cys-47-Cys-190. Asp-85 contributes to the Mg(2+) binding site.

The protein belongs to the arthropod phospholipase D family. Class II subfamily. Requires Mg(2+) as cofactor. Expressed by the venom gland.

It is found in the secreted. It carries out the reaction an N-(acyl)-sphingosylphosphocholine = an N-(acyl)-sphingosyl-1,3-cyclic phosphate + choline. The enzyme catalyses an N-(acyl)-sphingosylphosphoethanolamine = an N-(acyl)-sphingosyl-1,3-cyclic phosphate + ethanolamine. It catalyses the reaction a 1-acyl-sn-glycero-3-phosphocholine = a 1-acyl-sn-glycero-2,3-cyclic phosphate + choline. The catalysed reaction is a 1-acyl-sn-glycero-3-phosphoethanolamine = a 1-acyl-sn-glycero-2,3-cyclic phosphate + ethanolamine. Its function is as follows. Dermonecrotic toxins cleave the phosphodiester linkage between the phosphate and headgroup of certain phospholipids (sphingolipid and lysolipid substrates), forming an alcohol (often choline) and a cyclic phosphate. This toxin acts on sphingomyelin (SM). It may also act on ceramide phosphoethanolamine (CPE), lysophosphatidylcholine (LPC) and lysophosphatidylethanolamine (LPE), but not on lysophosphatidylserine (LPS), and lysophosphatidylglycerol (LPG). It acts by transphosphatidylation, releasing exclusively cyclic phosphate products as second products. Induces dermonecrosis, hemolysis, increased vascular permeability, edema, inflammatory response, and platelet aggregation. This Loxosceles spadicea (Recluse spider) protein is Dermonecrotic toxin LspaSicTox-alphaIA2iv.